We begin with the raw amino-acid sequence, 280 residues long: Thioesterase pynI (280 aa).

Residues 136–145 (LADDSDDEDN) are compositionally biased toward acidic residues. Residues 136 to 167 (LADDSDDEDNRSDASDASDDGSTMSDEEEEDD) are disordered.

The protein belongs to the AMT4 thioesterase family.

It participates in secondary metabolite biosynthesis. Its function is as follows. Thioesterase; part of the gene cluster that mediates the biosynthesis of pyranonigrins, a family of antioxidative compounds. The first step of pyranonigrins biosynthesis is performed by the hybrid PKS-NRPS synthetase that condenses 6 malonyl-CoA units to an acetyl starter unit, to form a 1,3,5-trioxotetradecane-6,8-dienyl-ACP. The enoyl reductase (ER) domain of pynA is likely to be functional during the first two rounds of polyketide chain extension, to generate the saturated C-C bonds of the alkyl side chain. PynA subsequently forms the amide bond between the acyl chain and L-serine. Although pynA has a terminal reductase domain, it appears to require the thioesterase pynI for the release of the straight-chain intermediate from pynA via the formation of a tetramic acid pyranonigrin J. The methyltransferase pynC then coverts pyranonigrin J to pyranonigrin I via N-methylation. The FAD-dependent monooxygenase pynG catalyzes an epoxidation-mediated cyclization to form the dihydro-gamma-pyrone moiety, followed by pynD-catalyzed oxidation of the alcohol to the ketone and enolization to yield the characteristic tetramic acid-fused gamma-pyrone core of pyranonigrin H. Pyranonigrin H is substrate of pynH for dehydration-mediated exo-methylene formation from the serine side chain to produce pyranonigrin E, before the oxidase pynE reduces the exo-methylene of pyranonigrin E into a pendant methyl to form pyranonigrin G. The FAD-linked oxidoreductase pynB performs the reverse reaction and converts pyranonigrin G back to pyranonigrin E. In Aspergillus niger (strain ATCC MYA-4892 / CBS 513.88 / FGSC A1513), this protein is Thioesterase pynI.